A 248-amino-acid chain; its full sequence is Small ribosomal subunit protein uS3 (248 aa).

The KH type-2 domain maps to 38–106 (IREFLSEGLE…QVQLNILEVK (69 aa)). Basic and acidic residues predominate over residues 214-229 (SLMNARDERPSRGGRR). Residues 214-248 (SLMNARDERPSRGGRRERPRRGGARRQRAEKKQEG) form a disordered region. The segment covering 230–242 (ERPRRGGARRQRA) has biased composition (basic residues).

It belongs to the universal ribosomal protein uS3 family. In terms of assembly, part of the 30S ribosomal subunit. Forms a tight complex with proteins S10 and S14.

In terms of biological role, binds the lower part of the 30S subunit head. Binds mRNA in the 70S ribosome, positioning it for translation. This is Small ribosomal subunit protein uS3 from Corynebacterium urealyticum (strain ATCC 43042 / DSM 7109).